An 83-amino-acid chain; its full sequence is Small ribosomal subunit protein bS16 (83 aa).

This sequence belongs to the bacterial ribosomal protein bS16 family.

This Shewanella frigidimarina (strain NCIMB 400) protein is Small ribosomal subunit protein bS16.